The following is a 290-amino-acid chain: Protease HtpX homolog (290 aa).

Transmembrane regions (helical) follow at residues 4-24 and 39-59; these read ILLFVLTNVMVVAVLGIVASL and TALLGFALVMGFGGAIISLLI. Histidine 144 is a binding site for Zn(2+). Residue glutamate 145 is part of the active site. Histidine 148 is a binding site for Zn(2+). 2 helical membrane passes run 159–179 and 199–219; these read LIQGVMNTFVVFLSRVIGYAV and VSTIVLDIVLGFAAAIVVAWF. Glutamate 224 is a binding site for Zn(2+).

This sequence belongs to the peptidase M48B family. Zn(2+) serves as cofactor.

The protein resides in the cell inner membrane. In Variovorax paradoxus (strain S110), this protein is Protease HtpX homolog.